The primary structure comprises 207 residues: Large ribosomal subunit protein uL4 (207 aa).

The disordered stretch occupies residues 50-76 (KTKTVSEVSGTTKKPFKQKGTGNARQG).

This sequence belongs to the universal ribosomal protein uL4 family. Part of the 50S ribosomal subunit.

Its function is as follows. One of the primary rRNA binding proteins, this protein initially binds near the 5'-end of the 23S rRNA. It is important during the early stages of 50S assembly. It makes multiple contacts with different domains of the 23S rRNA in the assembled 50S subunit and ribosome. Functionally, forms part of the polypeptide exit tunnel. The polypeptide is Large ribosomal subunit protein uL4 (Rickettsia typhi (strain ATCC VR-144 / Wilmington)).